The primary structure comprises 398 residues: Lysophosphatidylserine lipase ABHD12 (398 aa).

Over 1 to 74 the chain is Cytoplasmic; that stretch reads MRKRTEPVAL…RKGLWLRLRK (74 aa). A helical transmembrane segment spans residues 75–95; that stretch reads ILFCVLGLYIAIPFLIKLCPG. The Extracellular portion of the chain corresponds to 96–398; it reads IQAKLIFLNF…LGKSEPEHQH (303 aa). N-linked (GlcNAc...) asparagine glycosylation is present at N123. Residue S246 is the Nucleophile of the active site. Catalysis depends on charge relay system residues D333 and H372.

It belongs to the serine esterase family.

It localises to the endoplasmic reticulum membrane. It catalyses the reaction 1-(9Z-octadecenoyl)-sn-glycero-3-phospho-L-serine + H2O = sn-glycero-3-phospho-L-serine + (9Z)-octadecenoate + H(+). The enzyme catalyses 1-(9Z-octadecenoyl)-sn-glycero-3-phospho-(1'-sn-glycerol) + H2O = sn-glycero-3-phospho-(1'-sn-glycerol) + (9Z)-octadecenoate + H(+). The catalysed reaction is 1-(9Z-octadecenoyl)-sn-glycero-3-phospho-(1D-myo-inositol) + H2O = sn-glycero-3-phospho-1D-myo-inositol + (9Z)-octadecenoate + H(+). It carries out the reaction 1-(9Z-octadecenoyl)-sn-glycero-3-phosphoethanolamine + H2O = sn-glycero-3-phosphoethanolamine + (9Z)-octadecenoate + H(+). It catalyses the reaction 1-(9Z-octadecenoyl)-sn-glycero-3-phosphocholine + H2O = 1-(9Z-octadecenoyl)-sn-glycerol + phosphocholine + H(+). The enzyme catalyses 2-(9Z-octadecenoyl)-glycerol + H2O = glycerol + (9Z)-octadecenoate + H(+). The catalysed reaction is 1-hexadecanoyl-sn-glycero-3-phospho-L-serine + H2O = sn-glycero-3-phospho-L-serine + hexadecanoate + H(+). It carries out the reaction 2-(5Z,8Z,11Z,14Z-eicosatetraenoyl)-glycerol + H2O = glycerol + (5Z,8Z,11Z,14Z)-eicosatetraenoate + H(+). It catalyses the reaction Hydrolyzes glycerol monoesters of long-chain fatty acids.. The enzyme catalyses 1-decanoylglycerol + H2O = decanoate + glycerol + H(+). The catalysed reaction is 1-dodecanoylglycerol + H2O = dodecanoate + glycerol + H(+). It carries out the reaction 1-tetradecanoylglycerol + H2O = tetradecanoate + glycerol + H(+). It catalyses the reaction 2-hexadecanoylglycerol + H2O = glycerol + hexadecanoate + H(+). The enzyme catalyses 1-(9Z-octadecenoyl)-glycerol + H2O = glycerol + (9Z)-octadecenoate + H(+). The catalysed reaction is 2-(9Z,12Z-octadecadienoyl)-glycerol + H2O = (9Z,12Z)-octadecadienoate + glycerol + H(+). It carries out the reaction 1-(5Z,8Z,11Z,14Z-eicosatetraenoyl)-glycerol + H2O = glycerol + (5Z,8Z,11Z,14Z)-eicosatetraenoate + H(+). It catalyses the reaction 1-(9Z,12Z-octadecadienoyl)-glycerol + H2O = (9Z,12Z)-octadecadienoate + glycerol + H(+). The enzyme catalyses 1-hexadecanoylglycerol + H2O = glycerol + hexadecanoate + H(+). The catalysed reaction is 1-octadecanoylglycerol + H2O = octadecanoate + glycerol + H(+). It carries out the reaction 1-octadecanoyl-2-(9,10-epoxyoctadecanoyl)-sn-glycero-3-phospho-L-serine + H2O = 9,10-epoxyoctadecanoate + 1-octadecanoyl-sn-glycero-3-phosphoserine + H(+). It catalyses the reaction 1-octadecanoyl-2-(10-hydroxyoctadecanoyl)-sn-glycero-3-phospho-L-serine + H2O = 1-octadecanoyl-sn-glycero-3-phosphoserine + 10-hydroxyoctadecanoate + H(+). The enzyme catalyses 1-hexadecanoyl-2-(10-hydroxyoctadecanoyl)-sn-glycero-3-phospho-L-serine + H2O = 10-hydroxyoctadecanoate + 1-hexadecanoyl-sn-glycero-3-phospho-L-serine + H(+). Lysophosphatidylserine (LPS) lipase that mediates the hydrolysis of lysophosphatidylserine, a class of signaling lipids that regulates immunological and neurological processes. Represents a major lysophosphatidylserine lipase in the brain, thereby playing a key role in the central nervous system. Also able to hydrolyze oxidized phosphatidylserine; oxidized phosphatidylserine is produced in response to severe inflammatory stress and constitutes a proapoptotic 'eat me' signal. Also has monoacylglycerol (MAG) lipase activity: hydrolyzes 2-arachidonoylglycerol (2-AG), thereby acting as a regulator of endocannabinoid signaling pathways. Has a strong preference for very-long-chain lipid substrates; substrate specificity is likely due to improved catalysis and not improved substrate binding. The protein is Lysophosphatidylserine lipase ABHD12 of Macaca fascicularis (Crab-eating macaque).